A 131-amino-acid chain; its full sequence is Small ribosomal subunit protein uS8 (131 aa).

This sequence belongs to the universal ribosomal protein uS8 family. Part of the 30S ribosomal subunit. Contacts proteins S5 and S12.

Its function is as follows. One of the primary rRNA binding proteins, it binds directly to 16S rRNA central domain where it helps coordinate assembly of the platform of the 30S subunit. This chain is Small ribosomal subunit protein uS8, found in Chlorobium limicola (strain DSM 245 / NBRC 103803 / 6330).